A 167-amino-acid polypeptide reads, in one-letter code: Telethonin (167 aa).

Serine 39 carries the phosphoserine modification. The segment at 144–167 (VPVSKPGALRRSLSRSMSQEAQRG) is disordered. A compositionally biased stretch (polar residues) spans 157 to 167 (SRSMSQEAQRG).

As to quaternary structure, interacts with MYOZ1, MYOZ2 and MYOZ3. Interacts with CSRP3. Interacts directly with the N-terminal Ig-like domains of 2 titin (TTN) molecules. Interacts with ANKRD2; the interaction is direct. In terms of tissue distribution, heart and skeletal muscle.

Its subcellular location is the cytoplasm. The protein resides in the myofibril. The protein localises to the sarcomere. Functionally, muscle assembly regulating factor. Mediates the antiparallel assembly of titin (TTN) molecules at the sarcomeric Z-disk. In Homo sapiens (Human), this protein is Telethonin (TCAP).